The chain runs to 486 residues: Ribulose bisphosphate carboxylase large chain (486 aa).

Positions 1 to 2 (MS) are excised as a propeptide. N123 and T173 together coordinate substrate. The active-site Proton acceptor is the K175. Position 177 (K177) interacts with substrate. Residues K201, D203, and E204 each contribute to the Mg(2+) site. N6-carboxylysine is present on K201. S208 is modified (phosphoserine). The active-site Proton acceptor is H294. R295 and H327 together coordinate substrate. T330 carries the phosphothreonine modification. S379 lines the substrate pocket.

It belongs to the RuBisCO large chain family. Type I subfamily. As to quaternary structure, heterohexadecamer of 8 large chains and 8 small chains; disulfide-linked. The disulfide link is formed within the large subunit homodimers. It depends on Mg(2+) as a cofactor. The disulfide bond which can form in the large chain dimeric partners within the hexadecamer appears to be associated with oxidative stress and protein turnover.

The protein resides in the plastid. Its subcellular location is the chloroplast. The catalysed reaction is 2 (2R)-3-phosphoglycerate + 2 H(+) = D-ribulose 1,5-bisphosphate + CO2 + H2O. It catalyses the reaction D-ribulose 1,5-bisphosphate + O2 = 2-phosphoglycolate + (2R)-3-phosphoglycerate + 2 H(+). Its function is as follows. RuBisCO catalyzes two reactions: the carboxylation of D-ribulose 1,5-bisphosphate, the primary event in carbon dioxide fixation, as well as the oxidative fragmentation of the pentose substrate in the photorespiration process. Both reactions occur simultaneously and in competition at the same active site. The chain is Ribulose bisphosphate carboxylase large chain from Aethionema grandiflorum (Persian stone-cress).